A 619-amino-acid chain; its full sequence is Alpha-(1,6)-fucosyltransferase (619 aa).

Topologically, residues 1-17 (MLLVRQLFGASANSWAR) are cytoplasmic. A helical; Signal-anchor for type II membrane protein transmembrane segment spans residues 18–38 (ALIIFVLAWIGLVYVFVVKLT). The Lumenal segment spans residues 39–619 (NTQGQQAAGE…TAKLPLYAGI (581 aa)). Disulfide bonds link cysteine 253-cysteine 315, cysteine 261-cysteine 279, and cysteine 267-cysteine 271. A GT23 domain is found at 255–539 (NARKLVCKLN…PDAAHRFKSL (285 aa)). Residues 345-351 (PRPPYLP) carry the SH3-binding motif. Residues 411–412 (RR) are important for donor substrate binding. An intrachain disulfide couples cysteine 511 to cysteine 518. The SH3 domain maps to 548-609 (QNAHNRRVVI…PSFKVEEKVD (62 aa)).

Belongs to the glycosyltransferase 23 family. It depends on Mn(2+) as a cofactor. The cofactor is Mg(2+).

It is found in the golgi apparatus. Its subcellular location is the golgi stack membrane. The enzyme catalyses N(4)-{beta-D-GlcNAc-(1-&gt;2)-alpha-D-Man-(1-&gt;3)-[beta-D-GlcNAc-(1-&gt;2)-alpha-D-Man-(1-&gt;6)]-beta-D-Man-(1-&gt;4)-beta-D-GlcNAc-(1-&gt;4)-beta-D-GlcNAc}-L-asparaginyl-[protein] + GDP-beta-L-fucose = an N(4)-{beta-D-GlcNAc-(1-&gt;2)-alpha-D-Man-(1-&gt;3)-[beta-D-GlcNAc-(1-&gt;2)-alpha-D-Man-(1-&gt;6)]-beta-D-Man-(1-&gt;4)-beta-D-GlcNAc-(1-&gt;4)-[alpha-L-Fuc-(1-&gt;6)]-beta-D-GlcNAc}-L-asparaginyl-[protein] + GDP + H(+). The protein operates within protein modification; protein glycosylation. Functionally, catalyzes the addition of fucose in alpha 1-6 linkage to the first GlcNAc residue, next to the peptide chains in N-glycans. The addition is prevented if the GlcNAc residue is already fucosylated. The sequence is that of Alpha-(1,6)-fucosyltransferase (FucT6) from Drosophila melanogaster (Fruit fly).